We begin with the raw amino-acid sequence, 337 residues long: NADH-quinone oxidoreductase subunit H (337 aa).

The next 8 membrane-spanning stretches (helical) occupy residues 13–33, 82–102, 115–135, 154–174, 187–207, 248–268, 274–294, and 313–333; these read IIIV…IAYL, AVFI…WAVI, VGVL…IMAG, MVSY…SAGS, GVWY…SILA, ILMS…PVDI, IPGI…FLWV, and VFLP…VTFD.

This sequence belongs to the complex I subunit 1 family. In terms of assembly, NDH-1 is composed of 14 different subunits. Subunits NuoA, H, J, K, L, M, N constitute the membrane sector of the complex.

The protein resides in the cell inner membrane. It carries out the reaction a quinone + NADH + 5 H(+)(in) = a quinol + NAD(+) + 4 H(+)(out). Its function is as follows. NDH-1 shuttles electrons from NADH, via FMN and iron-sulfur (Fe-S) centers, to quinones in the respiratory chain. The immediate electron acceptor for the enzyme in this species is believed to be ubiquinone. Couples the redox reaction to proton translocation (for every two electrons transferred, four hydrogen ions are translocated across the cytoplasmic membrane), and thus conserves the redox energy in a proton gradient. This subunit may bind ubiquinone. This is NADH-quinone oxidoreductase subunit H from Rhodospirillum rubrum (strain ATCC 11170 / ATH 1.1.1 / DSM 467 / LMG 4362 / NCIMB 8255 / S1).